The chain runs to 265 residues: Protein Exd1 homolog (265 aa).

The 3'-5' exonuclease domain maps to 32–82 (EKQLDRIVLIYQVDTTYHSALKDIKDQKIISLLVEPSFYGRHHPTSILVVA).

This sequence belongs to the EXD1 family. Homodimer.

RNA-binding protein. Inactive exonuclease. The polypeptide is Protein Exd1 homolog (Drosophila melanogaster (Fruit fly)).